The chain runs to 295 residues: Undecaprenyl-diphosphatase (295 aa).

6 helical membrane passes run 39–59 (PGAAFTAIIQIGTELAVLLYF), 97–117 (WYIIIATIPILIAGVLFQHAI), 121–141 (LRNLWITVAMLFIFGVILWIV), 198–218 (AFLMAIPAVFGAGILEAVKAI), 232–252 (ATIAATVVAFVVGYIVIIGFL), and 263–283 (FAIYRIALAIIVAILLLCGVL).

It belongs to the UppP family.

Its subcellular location is the cell membrane. It carries out the reaction di-trans,octa-cis-undecaprenyl diphosphate + H2O = di-trans,octa-cis-undecaprenyl phosphate + phosphate + H(+). In terms of biological role, catalyzes the dephosphorylation of undecaprenyl diphosphate (UPP). Confers resistance to bacitracin. This Bifidobacterium animalis subsp. lactis (strain AD011) protein is Undecaprenyl-diphosphatase.